Consider the following 338-residue polypeptide: Ketol-acid reductoisomerase (NADP(+)) (338 aa).

The region spanning 1–181 (MKVYYDKDAD…GGTRGGVIET (181 aa)) is the KARI N-terminal Rossmann domain. NADP(+) contacts are provided by residues 24–27 (YGSQ), arginine 47, and serine 52. The active site involves histidine 107. Residue glycine 133 coordinates NADP(+). Residues 182 to 327 (TFKEETETDL…AKLRDMMPWI (146 aa)) enclose the KARI C-terminal knotted domain. Mg(2+) contacts are provided by aspartate 190, glutamate 194, glutamate 226, and glutamate 230. Serine 251 is a binding site for substrate.

Belongs to the ketol-acid reductoisomerase family. Requires Mg(2+) as cofactor.

The catalysed reaction is (2R)-2,3-dihydroxy-3-methylbutanoate + NADP(+) = (2S)-2-acetolactate + NADPH + H(+). The enzyme catalyses (2R,3R)-2,3-dihydroxy-3-methylpentanoate + NADP(+) = (S)-2-ethyl-2-hydroxy-3-oxobutanoate + NADPH + H(+). It participates in amino-acid biosynthesis; L-isoleucine biosynthesis; L-isoleucine from 2-oxobutanoate: step 2/4. It functions in the pathway amino-acid biosynthesis; L-valine biosynthesis; L-valine from pyruvate: step 2/4. Functionally, involved in the biosynthesis of branched-chain amino acids (BCAA). Catalyzes an alkyl-migration followed by a ketol-acid reduction of (S)-2-acetolactate (S2AL) to yield (R)-2,3-dihydroxy-isovalerate. In the isomerase reaction, S2AL is rearranged via a Mg-dependent methyl migration to produce 3-hydroxy-3-methyl-2-ketobutyrate (HMKB). In the reductase reaction, this 2-ketoacid undergoes a metal-dependent reduction by NADPH to yield (R)-2,3-dihydroxy-isovalerate. This Nitrosomonas europaea (strain ATCC 19718 / CIP 103999 / KCTC 2705 / NBRC 14298) protein is Ketol-acid reductoisomerase (NADP(+)).